The sequence spans 940 residues: UvrABC system protein A (940 aa).

31–38 is an ATP binding site; that stretch reads GLSGSGKS. The C4-type zinc-finger motif lies at 253-280; sequence CPICGYSMRELEPRLFSFNNPAGACPTC. 2 ABC transporter domains span residues 310–587 and 607–937; these read WDRR…PESL and ANPE…RFLK. Residue 640–647 coordinates ATP; the sequence is GVSGSGKS. Residues 740–766 form a C4-type zinc finger; sequence CEACQGDGVIKVEMHFLPDIYVPCDQC.

This sequence belongs to the ABC transporter superfamily. UvrA family. In terms of assembly, forms a heterotetramer with UvrB during the search for lesions. Interacts with TRCF (Mfd). UvrB and TRCF binding to UvrA could be mutually exclusive.

It localises to the cytoplasm. Its function is as follows. The UvrABC repair system catalyzes the recognition and processing of DNA lesions. UvrA is an ATPase and a DNA-binding protein. A damage recognition complex composed of 2 UvrA and 2 UvrB subunits scans DNA for abnormalities. When the presence of a lesion has been verified by UvrB, the UvrA molecules dissociate. In Escherichia coli (strain K12), this protein is UvrABC system protein A.